The sequence spans 464 residues: Glucan 1,3-beta-glucosidase 3 (464 aa).

Belongs to the glycosyl hydrolase 5 (cellulase A) family.

The catalysed reaction is Successive hydrolysis of beta-D-glucose units from the non-reducing ends of (1-&gt;3)-beta-D-glucans, releasing alpha-glucose.. The protein is Glucan 1,3-beta-glucosidase 3 (exg3) of Schizosaccharomyces pombe (strain 972 / ATCC 24843) (Fission yeast).